Consider the following 294-residue polypeptide: Diaminopimelate epimerase (294 aa).

Positions 13, 46, and 69 each coordinate substrate. Residue C78 is the Proton donor of the active site. Substrate contacts are provided by residues 79–80 (GN), N173, N206, and 224–225 (ER). C233 (proton acceptor) is an active-site residue. 234–235 (GT) is a binding site for substrate.

Belongs to the diaminopimelate epimerase family. As to quaternary structure, homodimer.

It is found in the cytoplasm. The enzyme catalyses (2S,6S)-2,6-diaminopimelate = meso-2,6-diaminopimelate. It functions in the pathway amino-acid biosynthesis; L-lysine biosynthesis via DAP pathway; DL-2,6-diaminopimelate from LL-2,6-diaminopimelate: step 1/1. Functionally, catalyzes the stereoinversion of LL-2,6-diaminopimelate (L,L-DAP) to meso-diaminopimelate (meso-DAP), a precursor of L-lysine and an essential component of the bacterial peptidoglycan. The chain is Diaminopimelate epimerase from Variovorax paradoxus (strain S110).